Reading from the N-terminus, the 1060-residue chain is Isoleucine--tRNA ligase (1060 aa).

Positions 55–65 (PTANGTPGVHH) match the 'HIGH' region motif. The 'KMSKS' region motif lies at 608-612 (KMSKH). Lys-611 contacts ATP.

The protein belongs to the class-I aminoacyl-tRNA synthetase family. IleS type 2 subfamily. In terms of assembly, monomer. It depends on Zn(2+) as a cofactor.

It localises to the cytoplasm. It catalyses the reaction tRNA(Ile) + L-isoleucine + ATP = L-isoleucyl-tRNA(Ile) + AMP + diphosphate. In terms of biological role, catalyzes the attachment of isoleucine to tRNA(Ile). As IleRS can inadvertently accommodate and process structurally similar amino acids such as valine, to avoid such errors it has two additional distinct tRNA(Ile)-dependent editing activities. One activity is designated as 'pretransfer' editing and involves the hydrolysis of activated Val-AMP. The other activity is designated 'posttransfer' editing and involves deacylation of mischarged Val-tRNA(Ile). This chain is Isoleucine--tRNA ligase, found in Thermobifida fusca (strain YX).